The primary structure comprises 263 residues: Outer membrane protein OmpK (263 aa).

A signal peptide spans 1–20; that stretch reads MRKSLLALSLLAATSAPVLA.

The protein belongs to the nucleoside-specific channel-forming outer membrane porin (Tsx) (TC 1.B.10) family.

It localises to the cell outer membrane. Serves as receptor for a broad-host-range vibriophage, KVP40. In Vibrio parahaemolyticus, this protein is Outer membrane protein OmpK.